The sequence spans 100 residues: Signal recognition particle 19 kDa protein (100 aa).

The protein belongs to the SRP19 family. In terms of assembly, part of the signal recognition particle protein translocation system, which is composed of SRP and FtsY. Archaeal SRP consists of a 7S RNA molecule of 300 nucleotides and two protein subunits: SRP54 and SRP19.

It localises to the cytoplasm. Functionally, involved in targeting and insertion of nascent membrane proteins into the cytoplasmic membrane. Binds directly to 7S RNA and mediates binding of the 54 kDa subunit of the SRP. The protein is Signal recognition particle 19 kDa protein of Caldivirga maquilingensis (strain ATCC 700844 / DSM 13496 / JCM 10307 / IC-167).